The sequence spans 786 residues: Cadherin-9 (786 aa).

Residues Met-1–Asn-21 form the signal peptide. Asn-21 carries N-linked (GlcNAc...) asparagine glycosylation. A propeptide spanning residues Ser-22–Arg-52 is cleaved from the precursor. Residues Ser-22–Ala-614 lie on the Extracellular side of the membrane. Cadherin domains lie at Trp-54–Phe-158, Thr-159–Phe-267, Pro-268–Phe-382, Ser-383–Phe-487, and Phe-487–Leu-604. Asn-254 carries N-linked (GlcNAc...) asparagine glycosylation. Asn-454 and Asn-535 each carry an N-linked (GlcNAc...) asparagine glycan. Residues Leu-615–Leu-635 traverse the membrane as a helical segment. The Cytoplasmic portion of the chain corresponds to Lys-636–Asp-786. Ser-785 is subject to Phosphoserine.

Its subcellular location is the cell membrane. In terms of biological role, cadherins are calcium-dependent cell adhesion proteins. They preferentially interact with themselves in a homophilic manner in connecting cells; cadherins may thus contribute to the sorting of heterogeneous cell types. This is Cadherin-9 (Cdh9) from Mus musculus (Mouse).